We begin with the raw amino-acid sequence, 87 residues long: Small ribosomal subunit protein uS15c (87 aa).

Belongs to the universal ribosomal protein uS15 family. As to quaternary structure, part of the 30S ribosomal subunit.

It localises to the plastid. Its subcellular location is the chloroplast. The polypeptide is Small ribosomal subunit protein uS15c (rps15) (Oenothera argillicola (Appalachian evening primrose)).